The sequence spans 459 residues: Tryptophan synthase beta chain (459 aa).

K121 is subject to N6-(pyridoxal phosphate)lysine.

The protein belongs to the TrpB family. As to quaternary structure, tetramer of two alpha and two beta chains. It depends on pyridoxal 5'-phosphate as a cofactor.

The enzyme catalyses (1S,2R)-1-C-(indol-3-yl)glycerol 3-phosphate + L-serine = D-glyceraldehyde 3-phosphate + L-tryptophan + H2O. The protein operates within amino-acid biosynthesis; L-tryptophan biosynthesis; L-tryptophan from chorismate: step 5/5. Functionally, the beta subunit is responsible for the synthesis of L-tryptophan from indole and L-serine. The polypeptide is Tryptophan synthase beta chain (trpB) (Pyrococcus horikoshii (strain ATCC 700860 / DSM 12428 / JCM 9974 / NBRC 100139 / OT-3)).